A 109-amino-acid chain; its full sequence is Co-chaperonin GroES (109 aa).

It belongs to the GroES chaperonin family. As to quaternary structure, heptamer of 7 subunits arranged in a ring. Interacts with the chaperonin GroEL.

It is found in the cytoplasm. Together with the chaperonin GroEL, plays an essential role in assisting protein folding. The GroEL-GroES system forms a nano-cage that allows encapsulation of the non-native substrate proteins and provides a physical environment optimized to promote and accelerate protein folding. GroES binds to the apical surface of the GroEL ring, thereby capping the opening of the GroEL channel. This chain is Co-chaperonin GroES, found in Methanosarcina acetivorans (strain ATCC 35395 / DSM 2834 / JCM 12185 / C2A).